The sequence spans 143 residues: Nucleoside diphosphate kinase (143 aa).

ATP contacts are provided by K11, F59, R87, T93, R104, and N114. H117 serves as the catalytic Pros-phosphohistidine intermediate.

This sequence belongs to the NDK family. Homotetramer. The cofactor is Mg(2+).

It localises to the cytoplasm. It carries out the reaction a 2'-deoxyribonucleoside 5'-diphosphate + ATP = a 2'-deoxyribonucleoside 5'-triphosphate + ADP. The catalysed reaction is a ribonucleoside 5'-diphosphate + ATP = a ribonucleoside 5'-triphosphate + ADP. Major role in the synthesis of nucleoside triphosphates other than ATP. The ATP gamma phosphate is transferred to the NDP beta phosphate via a ping-pong mechanism, using a phosphorylated active-site intermediate. This Escherichia coli O81 (strain ED1a) protein is Nucleoside diphosphate kinase.